Consider the following 98-residue polypeptide: MFEQRVNSDVLTVATVNSQDQVTQKPLRDSVKQALKNYFAQLNGQDVNDLYELVLAEVEQPLLDMVMQYTRGNQTRAAQMMGINRGTLRKKLKKYGMN.

The segment at residues 74-93 (QTRAAQMMGINRGTLRKKLK) is a DNA-binding region (H-T-H motif).

Belongs to the transcriptional regulatory Fis family. As to quaternary structure, homodimer.

Its function is as follows. Activates ribosomal RNA transcription. Plays a direct role in upstream activation of rRNA promoters. This is DNA-binding protein Fis from Proteus hauseri.